The following is a 276-amino-acid chain: Light-independent protochlorophyllide reductase iron-sulfur ATP-binding protein (276 aa).

ATP contacts are provided by residues 12-17 (GIGKST) and lysine 41. A Mg(2+)-binding site is contributed by serine 16. Residues cysteine 97 and cysteine 131 each contribute to the [4Fe-4S] cluster site. 182 to 183 (NR) is an ATP binding site.

The protein belongs to the NifH/BchL/ChlL family. Homodimer. Protochlorophyllide reductase is composed of three subunits; BchL, BchN and BchB. Requires [4Fe-4S] cluster as cofactor.

It catalyses the reaction chlorophyllide a + oxidized 2[4Fe-4S]-[ferredoxin] + 2 ADP + 2 phosphate = protochlorophyllide a + reduced 2[4Fe-4S]-[ferredoxin] + 2 ATP + 2 H2O. Its pathway is porphyrin-containing compound metabolism; bacteriochlorophyll biosynthesis (light-independent). Functionally, component of the dark-operative protochlorophyllide reductase (DPOR) that uses Mg-ATP and reduced ferredoxin to reduce ring D of protochlorophyllide (Pchlide) to form chlorophyllide a (Chlide). This reaction is light-independent. The L component serves as a unique electron donor to the NB-component of the complex, and binds Mg-ATP. This chain is Light-independent protochlorophyllide reductase iron-sulfur ATP-binding protein, found in Chlorobaculum tepidum (strain ATCC 49652 / DSM 12025 / NBRC 103806 / TLS) (Chlorobium tepidum).